Reading from the N-terminus, the 577-residue chain is Arginine--tRNA ligase (577 aa).

Positions Pro122 to His132 match the 'HIGH' region motif.

It belongs to the class-I aminoacyl-tRNA synthetase family. In terms of assembly, monomer.

It is found in the cytoplasm. The catalysed reaction is tRNA(Arg) + L-arginine + ATP = L-arginyl-tRNA(Arg) + AMP + diphosphate. This chain is Arginine--tRNA ligase, found in Escherichia coli O8 (strain IAI1).